The following is a 71-amino-acid chain: DNA-directed RNA polymerase subunit epsilon (71 aa).

This sequence belongs to the RNA polymerase subunit epsilon family. As to quaternary structure, RNAP is composed of a core of 2 alpha, a beta and a beta' subunit. The core is associated with a delta subunit, and at least one of epsilon or omega. When a sigma factor is associated with the core the holoenzyme is formed, which can initiate transcription.

It catalyses the reaction RNA(n) + a ribonucleoside 5'-triphosphate = RNA(n+1) + diphosphate. Its function is as follows. A non-essential component of RNA polymerase (RNAP). This chain is DNA-directed RNA polymerase subunit epsilon, found in Geobacillus thermodenitrificans (strain NG80-2).